The primary structure comprises 369 residues: tRNA-specific 2-thiouridylase MnmA (369 aa).

ATP contacts are provided by residues 11–18 and Met37; that span reads GMSGGVDS. An interaction with target base in tRNA region spans residues 97-99; that stretch reads NPD. Cys102 (nucleophile) is an active-site residue. Cysteines 102 and 199 form a disulfide. An ATP-binding site is contributed by Gly127. Positions 149-151 are interaction with tRNA; that stretch reads KDQ. Cys199 (cysteine persulfide intermediate) is an active-site residue. The interaction with tRNA stretch occupies residues 311 to 312; the sequence is RY.

This sequence belongs to the MnmA/TRMU family. As to quaternary structure, interacts with TusE.

Its subcellular location is the cytoplasm. It carries out the reaction S-sulfanyl-L-cysteinyl-[protein] + uridine(34) in tRNA + AH2 + ATP = 2-thiouridine(34) in tRNA + L-cysteinyl-[protein] + A + AMP + diphosphate + H(+). Its function is as follows. Catalyzes the 2-thiolation of uridine at the wobble position (U34) of tRNA(Lys), tRNA(Glu) and tRNA(Gln), leading to the formation of s(2)U34, the first step of tRNA-mnm(5)s(2)U34 synthesis. Sulfur is provided by IscS, via a sulfur-relay system. Binds ATP and its substrate tRNAs. In Enterobacter sp. (strain 638), this protein is tRNA-specific 2-thiouridylase MnmA.